Reading from the N-terminus, the 252-residue chain is Adaptation to cold protein B (252 aa).

As to quaternary structure, interacts with AtcC, but not with AtcA and AtcJ. Interacts with the RNA polymerase subunits RpoB and RpoC.

Functionally, involved in cold adaptation. Directly interacts with the RNA polymerase and decreases its activity. May direct the DnaK chaperone to the RNA polymerase to sustain life at low temperatures. Overproduction prevents bacterial growth due to RNA polymerase inhibition. The sequence is that of Adaptation to cold protein B from Shewanella oneidensis (strain ATCC 700550 / JCM 31522 / CIP 106686 / LMG 19005 / NCIMB 14063 / MR-1).